We begin with the raw amino-acid sequence, 748 residues long: MATTVQLSDQSLRQLETLAIHTAHLIQPHGLVVVLQEPDLTISQISANCTGILGRSPEDLLGRTLGEVFDSFQIDPIQSRLTAGQISSLNPSKLWARVMGDDFVIFDGVFHRNSDGLLVCELEPAYTSDNLPFLGFYHMANAALNRLRQQANLRDFYDVIVEEVRRMTGFDRVMLYRFDENNHGDVIAEDKRDDMEPYLGLHYPESDIPQPARRLFIHNPIRVIPDVYGVAVPLTPAVNPSTNRAVDLTESILRSAYHCHLTYLKNMGVGASLTISLIKDGHLWGLIACHHQTPKVIPFELRKACEFFGRVVFSNISAQEDTETFDYRVQLAEHEAVLLDKMTTAADFVEGLTNHPDRLLGLTGSQGAAICFGEKLILVGETPDEKAVQYLLQWLENREVQDVFFTSSLSQIYPDAVNFKSVASGLLAIPIARHNFLLWFRPEVLQTVNWGGDPNHAYEATQEDGKIELHPRQSFDLWKEIVRLQSLPWQSVEIQSALALKKAIVNLILRQAEELAQLARNLERSNADLKKFAYIASHDLQEPLNQVSNYVQLLEMRYSEALDEDAKDFIDFAVTGVSLMQTLIDDILTYAKVDTQYAQLTFTDVQEVVDKALANLKQRIEESGAEIEVGSMPAVMADQIQLMQVFQNLIANGIKFAGDKSPKIKIWGDRQEDAWVFAVQDNGIGIDPQFFERIFVIFQRLHTRDEYKGTGMGLAICKKIIEGHQGQIWLESNPGEGSTFYFSIPIGN.

The region spanning 19–86 (AIHTAHLIQP…IQSRLTAGQI (68 aa)) is the PAS domain. The interval 87 to 510 (SSLNPSKLWA…KKAIVNLILR (424 aa)) is chromophore binding domain. Residues 152-320 (NLRDFYDVIV…VVFSNISAQE (169 aa)) enclose the GAF domain. Cys259 is an a tetrapyrrole binding site. A Histidine kinase domain is found at 535–748 (IASHDLQEPL…TFYFSIPIGN (214 aa)). A Phosphohistidine; by autocatalysis modification is found at His538.

The protein in the N-terminal section; belongs to the phytochrome family. In terms of assembly, homodimer. In terms of processing, contains one covalently linked tetrapyrrole chromophore.

The catalysed reaction is ATP + protein L-histidine = ADP + protein N-phospho-L-histidine.. Its function is as follows. Regulatory photoreceptor which exists in two forms that are reversibly interconvertible by light: the R form that absorbs maximally in the red region of the spectrum and the FR form that absorbs maximally in the far-red region. Also has a slight blue shift for the far-red maximum. Forms a two-component system with the Rrcp1 response regulator. This Synechocystis sp. (strain ATCC 27184 / PCC 6803 / Kazusa) protein is Phytochrome-like protein Cph1 (cph1).